A 241-amino-acid polypeptide reads, in one-letter code: Endo-chitosanase B (241 aa).

The first 17 residues, 1 to 17 (MRLSEILAVALVTGATA), serve as a signal peptide directing secretion. N-linked (GlcNAc...) asparagine glycosylation is present at N86.

It belongs to the glycosyl hydrolase 75 family.

The protein resides in the secreted. The enzyme catalyses Endohydrolysis of beta-(1-&gt;4)-linkages between D-glucosamine residues in a partly acetylated chitosan.. Its function is as follows. Chitosanase catalyzing the endo-type cleavage of chitosan, the deacylated form of chitin. Chitosanase may be crucial in the degradation of the deacetylated portion of chitin in the fungal cell wall. Chitoolisaccharides produced by the hydrolysis of partially N-acetylated chitosan are known to have many biological activities, including antibacterial activity, immune-enhancing effects, and elicitor activity. The chain is Endo-chitosanase B (csnB) from Aspergillus oryzae (strain ATCC 42149 / RIB 40) (Yellow koji mold).